Consider the following 295-residue polypeptide: Probable isochorismatase (295 aa).

Residues 1-21 form a disordered region; the sequence is MGIPKIAGYPLPTPAEFPDNR. The region spanning 207–286 is the Carrier domain; the sequence is EIRSQKPLTL…EWWLVIEQAR (80 aa). An O-(pantetheine 4'-phosphoryl)serine modification is found at Ser-247.

The protein belongs to the isochorismatase family. The cofactor is pantetheine 4'-phosphate.

The catalysed reaction is isochorismate + H2O = (2S,3S)-2,3-dihydroxy-2,3-dihydrobenzoate + pyruvate. Its pathway is siderophore biosynthesis; vulnibactin biosynthesis. Involved in the biosynthesis of the catechol siderophore vulnibactin. Vulnibactin is a chelating compound involved in transporting iron from the bacterial environment into the cell cytoplasm. The protein is Probable isochorismatase (venB) of Vibrio vulnificus (strain CMCP6).